The chain runs to 64 residues: Large ribosomal subunit protein bL32 (64 aa).

It belongs to the bacterial ribosomal protein bL32 family.

The protein is Large ribosomal subunit protein bL32 of Bifidobacterium longum (strain DJO10A).